The following is a 315-amino-acid chain: FAD-linked oxidoreductase sthB (315 aa).

An FAD-binding PCMH-type domain is found at Gln-19 to Asp-201.

Belongs to the oxygen-dependent FAD-linked oxidoreductase family.

It catalyses the reaction betaenone C = betaenone A. The enzyme catalyses stemphyloxin I = stemphyloxin II. It functions in the pathway mycotoxin biosynthesis. Its function is as follows. FAD-linked oxidoreductase; part of the gene cluster that mediates the biosynthesis of the phytotoxin stemphyloxin II. The first step of the pathway is the synthesis of dehydroprobetaenone I by the polyketide synthase sthA and the enoyl reductase sthE via condensation of one acetyl-CoA starter unit with 7 malonyl-CoA units and 5 methylations. The C-terminal reductase (R) domain of sthA catalyzes the reductive release of the polyketide chain. Because sthA lacks a designated enoylreductase (ER) domain, the required activity is provided the enoyl reductase sthE. The short-chain dehydrogenase/reductase sthC then catalyzes reduction of dehydroprobetaenone I to probetaenone I. The cytochrome P450 monooxygenase sthF catalyzes successive epoxidation, oxidation (resulting from epoxide opening) and hydroxylation to install a tertiary alcohol in the decaline ring to yield betaenone C from dehydroprobetaenone I and betaenone B from probetaenone I. The FAD-linked oxidoreductase sthB is responsible for the conversion of betaenone C to betaenone A via an intramolecular aldol reaction between C-1 and C-17 to form the bridged tricyclic system in betaenone A. Finally, the cytochrome P450 monooxygenase sthD catalyzes the hydroxylation of C-15 to afford the final metabolite stemphyloxin II. This chain is FAD-linked oxidoreductase sthB, found in Phaeosphaeria nodorum (strain SN15 / ATCC MYA-4574 / FGSC 10173) (Glume blotch fungus).